The sequence spans 362 residues: MIIDRVQVEAINSFSNLELLKEVYGLIWILPILTLLLGITIEVLVIVWLEREISASIQQRIGPEYAGPLGLLQAIADGTKLLFKEDILPSRGDIPLFSIGPSIAVISILLSFLVIPLGYRFVLADLSIGVFLWIAISSIAPIGLLMAGYSSNNKYSFLGGLRAAAQSISYEIPLTFCVLAISLLSNSLSTVDIVEAQSKYGFFGWNLWRQPIGFLVFLISSLAECERLPFDLPEAEEELVAGYQTEYSGIKYGLFYLVSYLNLLVSSLFVTVLYLGGWNLSIPYISFFGFFQMNKMVGILEMTMSIFITLTKAYLFLFISITIRWTLPRMRMDQLLNLGWKFLLPISLGNLLLTTSFQLVSL.

Transmembrane regions (helical) follow at residues 27 to 47, 94 to 114, 128 to 148, 164 to 184, 202 to 222, 247 to 267, 303 to 323, and 335 to 355; these read IWIL…LVIV, IPLF…SFLV, IGVF…LMAG, AAQS…ISLL, FFGW…ISSL, YSGI…LVSS, TMSI…SITI, and LLNL…LLTT.

The protein belongs to the complex I subunit 1 family. In terms of assembly, NDH is composed of at least 16 different subunits, 5 of which are encoded in the nucleus.

The protein localises to the plastid. The protein resides in the chloroplast thylakoid membrane. The enzyme catalyses a plastoquinone + NADH + (n+1) H(+)(in) = a plastoquinol + NAD(+) + n H(+)(out). The catalysed reaction is a plastoquinone + NADPH + (n+1) H(+)(in) = a plastoquinol + NADP(+) + n H(+)(out). NDH shuttles electrons from NAD(P)H:plastoquinone, via FMN and iron-sulfur (Fe-S) centers, to quinones in the photosynthetic chain and possibly in a chloroplast respiratory chain. The immediate electron acceptor for the enzyme in this species is believed to be plastoquinone. Couples the redox reaction to proton translocation, and thus conserves the redox energy in a proton gradient. This chain is NAD(P)H-quinone oxidoreductase subunit 1, chloroplastic (ndhA), found in Oryza sativa (Rice).